The following is a 6885-amino-acid chain: Nesprin-2 (6885 aa).

Residues 1–286 (MASSPELPTE…YVAQFLQYSK (286 aa)) form an actin-binding region. The Cytoplasmic segment spans residues 1–6834 (MASSPELPTE…QRSFLSRVVR (6834 aa)). Calponin-homology (CH) domains lie at 31–136 (DTQK…LHFH) and 181–286 (MSAR…QYSK). 7 Spectrin repeats span residues 297–378 (GKVK…HQIN), 379–472 (AWKI…RINN), 473–575 (ILEK…KNIY), 576–680 (NVKS…KQDQ), 735–838 (VAKD…KNLT), 839–932 (DVSP…LHHE), and 933–1034 (LSLY…KCAS). Residues 297–6782 (GKVKDAMGWL…PASPLPSFDE (6486 aa)) are a coiled coil. Ser841 bears the Phosphoserine mark. Lys955 is subject to N6-acetyllysine. Residues 1042–1059 (PTAGGTSKNEGTITTSEN) are compositionally biased toward polar residues. Positions 1042–1084 (PTAGGTSKNEGTITTSENRGGDPHSEAPFAKSDNQPSTEKAME) are disordered. 12 Spectrin repeats span residues 1121–1212 (TYRD…TLNT), 1263–1323 (NIQD…DTLK), 1324–1419 (ALED…YGVQ), 1420–1524 (EEFT…ALVT), 1525–1636 (ECLE…KTED), 1637–1738 (YYEN…TGES), 1739–1830 (NCHA…TKKS), 1831–1938 (VLQD…AKEL), 1939–2036 (EDSL…EEED), 2037–2132 (KLLP…LAST), 2133–2243 (YLSH…SVQN), and 2244–2360 (LDGH…LNSI). The span at 2368–2382 (EKKGKFTLPGREKQA) shows a compositional bias: basic and acidic residues. The tract at residues 2368-2394 (EKKGKFTLPGREKQATSDVQESTQESA) is disordered. Residues 2383–2393 (TSDVQESTQES) show a composition bias toward polar residues. Spectrin repeat units lie at residues 2432-2513 (DERK…TLKK), 2514-2620 (NKES…KYSQ), 2621-2717 (QVVE…ETLE), 2718-2831 (PLHL…QLEF), 2832-2933 (KLEE…FIQN), 2934-3036 (TCNE…EKIK), 3037-3142 (QLDT…NMVL), 3143-3248 (ELSP…DLRT), 3249-3352 (NVLN…AQET), 3353-3465 (EAER…MWCE), 3466-3573 (ELKQ…KVQK), 3574-3679 (NKEL…SNEV), 3680-3777 (LKSS…ECRT), 3778-3880 (SQLN…KIME), 3881-3986 (SLPQ…VTQE), and 3987-4086 (QNEL…LPAV). Ser2781 bears the Phosphoserine mark. 2 stretches are compositionally biased toward basic and acidic residues: residues 4073 to 4083 (QEQEGVERDRL) and 4093 to 4102 (VAERDASERK). Disordered stretches follow at residues 4073–4162 (QEQE…SGTI), 4184–4232 (DSLN…KTRP), 4335–4363 (EKHS…PVNL), and 4416–4448 (HDND…QGQN). A Phosphoserine modification is found at Ser4108. Basic and acidic residues-rich tracts occupy residues 4122-4134 (SSVK…EKAE) and 4144-4155 (WKHDKDMEEDRA). A Spectrin 36 repeat occupies 4229–4348 (KTRPEPTEVL…EDQHPTILKK (120 aa)). Over residues 4335–4356 (EKHSEDQHPTILKKSSEPEHQE) the composition is skewed to basic and acidic residues. Over residues 4421–4434 (TQESSASNQASSPE) the composition is skewed to polar residues. 17 Spectrin repeats span residues 4520–4639 (NMTE…RSYQ), 4640–4727 (NEIK…RARY), 4728–4837 (TELS…QSLL), 4838–4943 (QKWE…QALL), 4944–5051 (KHLL…QEKL), 5052–5164 (HQLQ…KIQH), 5165–5266 (LEQL…TQVN), 5267–5391 (QLKT…KAYS), 5392–5487 (NAHG…MLLV), 5488–5589 (KANE…CSEL), 5590–5704 (QGIG…QWQD), 5705–5799 (FTTS…PQLA), 5800–5907 (EMIK…RVAI), 5908–6017 (RKQE…VKKL), 6018–6135 (KETF…EETW), 6136–6243 (RLWQ…LRHF), and 6244–6355 (TNQR…PGLE). A Phosphoserine modification is found at Ser5785. Over residues 6354–6367 (LEDEKEASENETDM) the composition is skewed to acidic residues. The segment at 6354–6508 (LEDEKEASEN…GTDGGKEGPR (155 aa)) is disordered. Residues Ser6361, Ser6384, Ser6411, Ser6428, Ser6429, Ser6430, and Ser6459 each carry the phosphoserine modification. Positions 6368 to 6384 (EDPREIQTDSWRKRGES) are enriched in basic and acidic residues. 3 Spectrin repeats span residues 6461-6549 (SCPE…KLKI), 6550-6665 (KQNL…QCQD), and 6666-6782 (FHQL…SFDE). The segment covering 6463–6474 (PEHHYKQMEGDR) has biased composition (basic and acidic residues). Residues 6477–6489 (PPVPPASSTPYKP) are compositionally biased toward pro residues. The segment covering 6490 to 6499 (PYGKLLLPPG) has biased composition (low complexity). The tract at residues 6769–6824 (GTQNPASPLPSFDEVDSGDQPPATSVPAPRAKQFRAVRTTEGEEETESRVPGSTRP) is disordered. In terms of domain architecture, KASH spans 6826–6885 (RSFLSRVVRAALPLQLLLLLLLLLACLLPSSEEDYSCTQANNFARSFYPMLRYTNGPPPT). A helical; Anchor for type IV membrane protein membrane pass occupies residues 6835 to 6855 (AALPLQLLLLLLLLLACLLPS). Topologically, residues 6856–6885 (SEEDYSCTQANNFARSFYPMLRYTNGPPPT) are perinuclear space. Residues 6872 to 6885 (FYPMLRYTNGPPPT) are sufficient for interaction with SUN2.

Belongs to the nesprin family. In terms of assembly, core component of LINC complexes which are composed of inner nuclear membrane SUN domain-containing proteins coupled to outer nuclear membrane KASH domain-containing nesprins. SUN and KASH domain-containing proteins seem to bind each other promiscuously; however, some LINC complex constituents are tissue- or cell type-specific. At least SUN1/2-containing core LINC complexes are proposed to be hexameric composed of three protomers of each KASH and SUN domain-containing protein. The SUN2:SYNE2/KASH2 complex is a heterohexamer; the homotrimeric cloverleave-like conformation of the SUN domain is a prerequisite for LINC complex formation in which three separate SYNE2/KASH2 peptides bind at the interface of adjacent SUN domains. Interacts with EMD, LMNA, MKS3 and F-actin via its N-terminal domain. Interacts with DCTN1 and DYNC1I1/2; suggesting the association with the dynein-dynactin motor complex. Associates with kinesin motor complexes. Interacts with TMEM67. Interacts (via KASH domain) with TMEM258. Interacts with BROX; this interaction promotes SYN2 ubiquitination and facilitates the relaxation of mechanical stress imposed by compressive actin fibers at the rupture site. In terms of processing, the disulfid bond with SUN2 is required for stability of the SUN2:SYNE2/KASH2 LINC complex under tensile forces though not required for the interaction. Post-translationally, ubiquitinated, targeting it for degradation. Widely expressed, with higher level in kidney, adult and fetal liver, stomach and placenta. Weakly expressed in skeletal muscle and brain. Isoform 5 is highly expressed in pancreas, skeletal muscle and heart.

Its subcellular location is the nucleus outer membrane. It is found in the sarcoplasmic reticulum membrane. It localises to the cell membrane. The protein resides in the cytoplasm. The protein localises to the cytoskeleton. Its subcellular location is the mitochondrion. It is found in the nucleus. It localises to the nucleoplasm. The protein resides in the myofibril. The protein localises to the sarcomere. Its subcellular location is the z line. It is found in the cell junction. It localises to the focal adhesion. Functionally, multi-isomeric modular protein which forms a linking network between organelles and the actin cytoskeleton to maintain the subcellular spatial organization. As a component of the LINC (LInker of Nucleoskeleton and Cytoskeleton) complex involved in the connection between the nuclear lamina and the cytoskeleton. The nucleocytoplasmic interactions established by the LINC complex play an important role in the transmission of mechanical forces across the nuclear envelope and in nuclear movement and positioning. Specifically, SYNE2 and SUN2 assemble in arrays of transmembrane actin-associated nuclear (TAN) lines which are bound to F-actin cables and couple the nucleus to retrograde actin flow during actin-dependent nuclear movement. May be involved in nucleus-centrosome attachment. During interkinetic nuclear migration (INM) at G2 phase and nuclear migration in neural progenitors its LINC complex association with SUN1/2 and probable association with cytoplasmic dynein-dynactin motor complexes functions to pull the nucleus toward the centrosome; SYNE1 and SYNE2 may act redundantly. During INM at G1 phase mediates respective LINC complex association with kinesin to push the nucleus away from the centrosome. Involved in nuclear migration in retinal photoreceptor progenitors. Required for centrosome migration to the apical cell surface during early ciliogenesis. Facilitates the relaxation of mechanical stress imposed by compressive actin fibers at the rupture site through its nteraction with SYN2. In Homo sapiens (Human), this protein is Nesprin-2.